The primary structure comprises 615 residues: DNA mismatch repair protein MutL (615 aa).

The tract at residues 370–397 (EPVAPRYTPAPASGSRPAAPWPNTQPGY) is disordered. Residues 378 to 391 (PAPASGSRPAAPWP) show a composition bias toward low complexity.

The protein belongs to the DNA mismatch repair MutL/HexB family.

This protein is involved in the repair of mismatches in DNA. It is required for dam-dependent methyl-directed DNA mismatch repair. May act as a 'molecular matchmaker', a protein that promotes the formation of a stable complex between two or more DNA-binding proteins in an ATP-dependent manner without itself being part of a final effector complex. The protein is DNA mismatch repair protein MutL of Shigella dysenteriae serotype 1 (strain Sd197).